The following is a 241-amino-acid chain: Probable transcriptional regulatory protein str0195 (241 aa).

This sequence belongs to the TACO1 family. YeeN subfamily.

It is found in the cytoplasm. This Streptococcus thermophilus (strain CNRZ 1066) protein is Probable transcriptional regulatory protein str0195.